Here is a 381-residue protein sequence, read N- to C-terminus: Phthiodiolone/phenolphthiodiolone dimycocerosates ketoreductase (381 aa).

It belongs to the mer family. Phthiodiolone/phenolphthiodiolone dimycocerosates ketoreductase subfamily.

In terms of biological role, catalyzes the reduction of the keto moiety of phthiodiolone dimycocerosates (DIM B) and glycosylated phenolphthiodiolone dimycocerosates to form the intermediate compounds phthiotriol and glycosylated phenolphthiotriol dimycocerosates during phthiocerol dimycocerosates (DIM A) and glycosylated phenolphthiocerol dimycocerosates (PGL) biosynthesis. This Mycobacterium tuberculosis (strain CDC 1551 / Oshkosh) protein is Phthiodiolone/phenolphthiodiolone dimycocerosates ketoreductase.